Consider the following 246-residue polypeptide: tRNA (guanine-N(1)-)-methyltransferase (246 aa).

S-adenosyl-L-methionine is bound by residues Gly-113 and 133–138 (IGDYVL).

It belongs to the RNA methyltransferase TrmD family. Homodimer.

The protein localises to the cytoplasm. The enzyme catalyses guanosine(37) in tRNA + S-adenosyl-L-methionine = N(1)-methylguanosine(37) in tRNA + S-adenosyl-L-homocysteine + H(+). Specifically methylates guanosine-37 in various tRNAs. The sequence is that of tRNA (guanine-N(1)-)-methyltransferase from Yersinia pseudotuberculosis serotype O:1b (strain IP 31758).